The primary structure comprises 872 residues: Cadherin-1 (872 aa).

The N-terminal stretch at 1–25 (MGLKRPWLLGAVVLLTLIQVQGGLA) is a signal peptide. A propeptide spanning residues 26 to 148 (EWTQCRMGFS…SETGLKRQKR (123 aa)) is cleaved from the precursor. 5 Cadherin domains span residues 148 to 256 (RDWV…DPVF), 257 to 370 (TQSV…PPVF), 371 to 481 (DPTQ…APIF), 482 to 589 (LPPV…GPFL), and 605 to 688 (VFTI…MQCE). Residues 149–701 (DWVIPPIIVS…AIAGGLGISA (553 aa)) are Extracellular-facing. An N-linked (GlcNAc...) asparagine glycan is attached at Asn209. Ca(2+) is bound by residues Asp251 and Asp282. N-linked (GlcNAc...) asparagine glycans are attached at residues Asn456, Asn552, Asn631, and Asn669. Residues 702-722 (IVGILGGILALLLLLLLLLLF) form a helical membrane-spanning segment. The Cytoplasmic segment spans residues 723–872 (VRRKKVVKEP…LADMYGGDED (150 aa)). Residues 739 to 758 (ETRDNVFSYDEEGGGEEDQD) form a disordered region. Residues 747–758 (YDEEGGGEEDQD) show a composition bias toward acidic residues.

As to quaternary structure, homodimer. As to expression, abundantly expressed in intestine, stomach, liver, kidney, skin and eye. Also expressed in heart, lung, testis, ovary, muscle and brain.

It is found in the cell junction. It localises to the adherens junction. The protein resides in the cell membrane. The protein localises to the endosome. Its subcellular location is the golgi apparatus. It is found in the trans-Golgi network. It localises to the cytoplasm. The protein resides in the desmosome. In terms of biological role, cadherins are calcium-dependent cell adhesion proteins. They preferentially interact with themselves in a homophilic manner in connecting cells; cadherins may thus contribute to the sorting of heterogeneous cell types. Promotes organization of radial actin fiber structure and cellular response to contractile forces, via anchoring of radial actin fibers to CDH1 junction complexes at the cell membrane. E-cadherin is a ligand for integrin alpha-E/beta-7. The polypeptide is Cadherin-1 (cdh1) (Xenopus laevis (African clawed frog)).